Consider the following 250-residue polypeptide: 5-oxoprolinase subunit A (250 aa).

It belongs to the LamB/PxpA family. As to quaternary structure, forms a complex composed of PxpA, PxpB and PxpC.

The enzyme catalyses 5-oxo-L-proline + ATP + 2 H2O = L-glutamate + ADP + phosphate + H(+). Catalyzes the cleavage of 5-oxoproline to form L-glutamate coupled to the hydrolysis of ATP to ADP and inorganic phosphate. This Staphylococcus aureus (strain MRSA252) protein is 5-oxoprolinase subunit A.